The primary structure comprises 530 residues: MEEDSLYLGGEWQFNHFSKLTSSRPDAAFAEIQRTSLPEKSPLSCETRVDLCDDLAPVARQLAPREKLPLSNRRPAAVGAGLQNMGNTCYVNASLQCLTYTPPLANYMLSREHSQTCHRHKGCMLCTMQAHITRALHNPGHVIQPSQALAAGFHRGKQEDAHEFLMFTVDAMKKACLPGHKQVDHHSKDTTLIHQIFGGYWRSQIKCLHCHGISDTFDPYLDIALDIQAAQSVQQALEQLVKPEELNGENAYHCGVCLQRAPASKMLTLLTSAKVLILVLKRFSDVTGNKIAKNVQYPECLDMQPYMSQPNTGPLVYVLYAVLVHAGWSCHNGHYFSYVKAQEGQWYKMDDAEVTASSITSVLSQQAYVLFYIQKSEWERHSESVSRGREPRALGAEDTDRRATQGELKRDHPCLQAPELDEHLVERATQESTLDHWKFLQEQNKTKPEFNVRKVEGTLPPDVLVIHQSKYKCGMKNHHPEQQSSLLNLSSSTPTHQESMNTGTLASLRGRARRSKGKNKHSKRALLVCQ.

A USP domain is found at 80–375 (AGLQNMGNTC…QAYVLFYIQK (296 aa)). The active-site Nucleophile is the C89. H334 functions as the Proton acceptor in the catalytic mechanism. Composition is skewed to basic and acidic residues over residues 382-392 (SESVSRGREPR) and 398-412 (DTDR…KRDH). Disordered stretches follow at residues 382–412 (SESV…KRDH) and 477–530 (NHHP…LVCQ). Residues 493–505 (TPTHQESMNTGTL) show a composition bias toward polar residues. Residues 510-524 (GRARRSKGKNKHSKR) are compositionally biased toward basic residues.

This sequence belongs to the peptidase C19 family. USP17 subfamily.

The protein resides in the nucleus. It localises to the endoplasmic reticulum. The catalysed reaction is Thiol-dependent hydrolysis of ester, thioester, amide, peptide and isopeptide bonds formed by the C-terminal Gly of ubiquitin (a 76-residue protein attached to proteins as an intracellular targeting signal).. Deubiquitinating enzyme that removes conjugated ubiquitin from specific proteins to regulate different cellular processes that may include cell proliferation, progression through the cell cycle, apoptosis, cell migration, and the cellular response to viral infection. The chain is Ubiquitin carboxyl-terminal hydrolase 17-like protein 21 (USP17L21) from Homo sapiens (Human).